The chain runs to 338 residues: Probable tRNA pseudouridine synthase B (338 aa).

Residue aspartate 78 is the Nucleophile of the active site. Residues 245 to 320 (LPKIILRDSA…LAATSVRIMM (76 aa)) form the PUA domain.

This sequence belongs to the pseudouridine synthase TruB family. Type 2 subfamily.

It carries out the reaction uridine(55) in tRNA = pseudouridine(55) in tRNA. Its function is as follows. Could be responsible for synthesis of pseudouridine from uracil-55 in the psi GC loop of transfer RNAs. In Methanosarcina barkeri (strain Fusaro / DSM 804), this protein is Probable tRNA pseudouridine synthase B.